The sequence spans 266 residues: Glucosamine-6-phosphate deaminase (266 aa).

The Proton acceptor; for enolization step role is filled by D72. The active-site For ring-opening step is D141. Catalysis depends on H143, which acts as the Proton acceptor; for ring-opening step. The active-site For ring-opening step is the E148.

It belongs to the glucosamine/galactosamine-6-phosphate isomerase family. NagB subfamily. As to quaternary structure, homohexamer.

The catalysed reaction is alpha-D-glucosamine 6-phosphate + H2O = beta-D-fructose 6-phosphate + NH4(+). Its pathway is amino-sugar metabolism; N-acetylneuraminate degradation; D-fructose 6-phosphate from N-acetylneuraminate: step 5/5. With respect to regulation, allosterically activated by N-acetylglucosamine 6-phosphate (GlcNAc6P). Functionally, catalyzes the reversible isomerization-deamination of glucosamine 6-phosphate (GlcN6P) to form fructose 6-phosphate (Fru6P) and ammonium ion. This is Glucosamine-6-phosphate deaminase from Pectobacterium carotovorum subsp. carotovorum (strain PC1).